Consider the following 91-residue polypeptide: Methanol dehydrogenase [cytochrome c] subunit 2 (91 aa).

The first 22 residues, 1–22, serve as a signal peptide directing secretion; that stretch reads MKHVLTLLALASVFAVSNQALA. A disulfide bridge links Cys-28 with Cys-34.

It belongs to the methanol dehydrogenase subunit 2 family. In terms of assembly, heterotetramer composed of 2 alpha and 2 beta subunits.

The protein resides in the cell inner membrane. The catalysed reaction is 2 Fe(III)-[cytochrome cL] + a primary alcohol = 2 Fe(II)-[cytochrome cL] + an aldehyde + 2 H(+). Functionally, catalyzes the oxidation of primary alcohols including methanol. The sequence is that of Methanol dehydrogenase [cytochrome c] subunit 2 (moxI) from Methylophilus methylotrophus (Bacterium W3A1).